Consider the following 304-residue polypeptide: Non-specific ribonucleoside hydrolase RihC (304 aa).

The active site involves H233.

The protein belongs to the IUNH family. RihC subfamily.

Functionally, hydrolyzes both purine and pyrimidine ribonucleosides with a broad-substrate specificity. In Escherichia coli O45:K1 (strain S88 / ExPEC), this protein is Non-specific ribonucleoside hydrolase RihC.